The following is a 299-amino-acid chain: Ig alpha chain C region (299 aa).

2 consecutive Ig-like domains span residues 71–167 (PSLS…ATIS) and 174–276 (PQVH…KTID).

Ig alpha is the major immunoglobulin class in body secretions. It may serve both to defend against local infection and to prevent access of foreign antigens to the general immunologic system. This Oryctolagus cuniculus (Rabbit) protein is Ig alpha chain C region.